Consider the following 189-residue polypeptide: Flavin prenyltransferase UbiX (189 aa).

FMN contacts are provided by residues 10 to 12 (GAS), Ser37, 88 to 91 (SIKT), and Arg123. Dimethylallyl phosphate-binding residues include Tyr153 and Arg169.

Belongs to the UbiX/PAD1 family.

The enzyme catalyses dimethylallyl phosphate + FMNH2 = prenylated FMNH2 + phosphate. It functions in the pathway cofactor biosynthesis; ubiquinone biosynthesis. Its function is as follows. Flavin prenyltransferase that catalyzes the synthesis of the prenylated FMN cofactor (prenyl-FMN) for 4-hydroxy-3-polyprenylbenzoic acid decarboxylase UbiD. The prenyltransferase is metal-independent and links a dimethylallyl moiety from dimethylallyl monophosphate (DMAP) to the flavin N5 and C6 atoms of FMN. This Escherichia coli O157:H7 protein is Flavin prenyltransferase UbiX.